Here is a 354-residue protein sequence, read N- to C-terminus: Guanine nucleotide-binding protein subunit alpha-14 (354 aa).

Residues 33–354 (RELKLLLLGT…QLNLREFNLV (322 aa)) enclose the G-alpha domain. The interval 36–49 (KLLLLGTGESGKST) is G1 motif. GTP contacts are provided by residues 41–48 (GTGESGKS), 175–181 (LRVRVPT), 200–204 (DVGGQ), 269–272 (NKKD), and Ala326. Mg(2+) contacts are provided by Ser48 and Thr181. The tract at residues 173–181 (DVLRVRVPT) is G2 motif. The interval 196 to 205 (FRMVDVGGQR) is G3 motif. The interval 265–272 (ILFLNKKD) is G4 motif. The tract at residues 324-329 (TCATDT) is G5 motif.

This sequence belongs to the G-alpha family. G(q) subfamily. As to quaternary structure, g proteins are composed of 3 units; alpha, beta and gamma. The alpha chain contains the guanine nucleotide binding site.

Functionally, guanine nucleotide-binding proteins (G proteins) are involved as modulators or transducers in various transmembrane signaling systems. Acts as an activator of phospholipase C. Mediates responses to trypsin. The chain is Guanine nucleotide-binding protein subunit alpha-14 (gna14) from Xenopus laevis (African clawed frog).